The primary structure comprises 396 residues: Elongation factor Tu 2 (396 aa).

Residues 10–206 (KPHCNVGTIG…AVDDYIPQPE (197 aa)) form the tr-type G domain. The tract at residues 19–26 (GHVDHGKT) is G1. 19 to 26 (GHVDHGKT) contacts GTP. Thr26 contributes to the Mg(2+) binding site. Residues 60-64 (GITIS) are G2. Residues 81–84 (DCPG) are G3. GTP contacts are provided by residues 81-85 (DCPGH) and 136-139 (NKCD). The segment at 136–139 (NKCD) is G4. The G5 stretch occupies residues 174–176 (SAL).

This sequence belongs to the TRAFAC class translation factor GTPase superfamily. Classic translation factor GTPase family. EF-Tu/EF-1A subfamily. In terms of assembly, monomer.

It is found in the cytoplasm. The enzyme catalyses GTP + H2O = GDP + phosphate + H(+). GTP hydrolase that promotes the GTP-dependent binding of aminoacyl-tRNA to the A-site of ribosomes during protein biosynthesis. In Rhodospirillum rubrum (strain ATCC 11170 / ATH 1.1.1 / DSM 467 / LMG 4362 / NCIMB 8255 / S1), this protein is Elongation factor Tu 2.